A 422-amino-acid polypeptide reads, in one-letter code: F-box protein At3g12350 (422 aa).

An F-box domain is found at 5-52 (ALPFCEIPEDLQLRILSLLTPAEISSFACTSKRFASLCQEDGKIWHVM). Basic and acidic residues-rich tracts occupy residues 197–207 (NNRREDQRSSG) and 242–252 (KEKERQASRTK). Disordered stretches follow at residues 197-216 (NNRR…LISS) and 226-252 (LANK…SRTK).

The polypeptide is F-box protein At3g12350 (Arabidopsis thaliana (Mouse-ear cress)).